A 160-amino-acid polypeptide reads, in one-letter code: Putative NrdI-like protein (160 aa).

This sequence belongs to the NrdI family.

This chain is Putative NrdI-like protein, found in Streptococcus pyogenes serotype M1.